We begin with the raw amino-acid sequence, 324 residues long: Acetyl-coenzyme A carboxylase carboxyl transferase subunit alpha (324 aa).

The region spanning 44 to 298 is the CoA carboxyltransferase C-terminal domain; the sequence is QLEAKATQLR…KTAIVKSLDD (255 aa).

The protein belongs to the AccA family. In terms of assembly, acetyl-CoA carboxylase is a heterohexamer composed of biotin carboxyl carrier protein (AccB), biotin carboxylase (AccC) and two subunits each of ACCase subunit alpha (AccA) and ACCase subunit beta (AccD).

It localises to the cytoplasm. The catalysed reaction is N(6)-carboxybiotinyl-L-lysyl-[protein] + acetyl-CoA = N(6)-biotinyl-L-lysyl-[protein] + malonyl-CoA. It participates in lipid metabolism; malonyl-CoA biosynthesis; malonyl-CoA from acetyl-CoA: step 1/1. Component of the acetyl coenzyme A carboxylase (ACC) complex. First, biotin carboxylase catalyzes the carboxylation of biotin on its carrier protein (BCCP) and then the CO(2) group is transferred by the carboxyltransferase to acetyl-CoA to form malonyl-CoA. The sequence is that of Acetyl-coenzyme A carboxylase carboxyl transferase subunit alpha from Trichodesmium erythraeum (strain IMS101).